The primary structure comprises 1110 residues: ATP-dependent DNA helicase MPH1 (1110 aa).

A compositionally biased stretch (polar residues) spans 24 to 34 (LNEVSDSQTGR). Disordered regions lie at residues 24-165 (LNEV…TNGK), 178-212 (FEEE…PVTN), and 236-305 (TETA…PTHH). Basic and acidic residues-rich tracts occupy residues 42 to 57 (NSHE…REIE) and 178 to 188 (FEEEQSARGDA). A compositionally biased stretch (acidic residues) spans 189–199 (EMLDDSIEEPG). 2 stretches are compositionally biased toward polar residues: residues 246 to 273 (ISSQ…QTTL) and 287 to 300 (QPAT…SRNE). The 169-residue stretch at 331-499 (IAHRALFHNL…EVIDGLSISR (169 aa)) folds into the Helicase ATP-binding domain. 344 to 351 (LPTGLGKT) lines the ATP pocket. The short motif at 447 to 450 (DEAH) is the DEAH box element. The region spanning 675-846 (ILNHFLDAGG…RFTFHTDKSS (172 aa)) is the Helicase C-terminal domain. 3 disordered regions span residues 867–937 (ENSQ…PDLG), 1013–1055 (VGDP…RCGT), and 1069–1110 (NLAW…DVFE). Residues 879–890 (RSRAPKRPPKKF) are compositionally biased toward basic residues. Basic and acidic residues-rich tracts occupy residues 891–900 (HMPDGVEKGF), 1041–1055 (QSRE…RCGT), and 1077–1093 (EAPR…DQKP).

It belongs to the DEAD box helicase family. DEAH subfamily. FANCM sub-subfamily. In terms of assembly, interacts with the MHF histone-fold complex to form the FANCM-MHF complex.

It is found in the nucleus. The enzyme catalyses ATP + H2O = ADP + phosphate + H(+). In terms of biological role, ATP-dependent DNA helicase involved in DNA damage repair by homologous recombination and in genome maintenance. Capable of unwinding D-loops. Plays a role in limiting crossover recombinants during mitotic DNA double-strand break (DSB) repair. Component of a FANCM-MHF complex which promotes gene conversion at blocked replication forks, probably by reversal of the stalled fork. The polypeptide is ATP-dependent DNA helicase MPH1 (Coccidioides immitis (strain RS) (Valley fever fungus)).